Consider the following 216-residue polypeptide: Uracil phosphoribosyltransferase (216 aa).

A GTP-binding site is contributed by 30-34; that stretch reads KTLVR. Residues Arg80, Arg105, and 140–148 contribute to the 5-phospho-alpha-D-ribose 1-diphosphate site; that span reads DPMIATAST. Uracil is bound by residues Ile203 and 208 to 210; that span reads GDA. Asp209 lines the 5-phospho-alpha-D-ribose 1-diphosphate pocket.

This sequence belongs to the UPRTase family. The cofactor is Mg(2+).

The catalysed reaction is UMP + diphosphate = 5-phospho-alpha-D-ribose 1-diphosphate + uracil. Its pathway is pyrimidine metabolism; UMP biosynthesis via salvage pathway; UMP from uracil: step 1/1. Its activity is regulated as follows. Allosterically activated by GTP. In terms of biological role, catalyzes the conversion of uracil and 5-phospho-alpha-D-ribose 1-diphosphate (PRPP) to UMP and diphosphate. This chain is Uracil phosphoribosyltransferase, found in Sulfurisphaera tokodaii (strain DSM 16993 / JCM 10545 / NBRC 100140 / 7) (Sulfolobus tokodaii).